We begin with the raw amino-acid sequence, 178 residues long: Interleukin-1 receptor antagonist protein (178 aa).

The first 26 residues, 1–26 (MEICWGPYSHLISLLLILLFHSEAAC), serve as a signal peptide directing secretion. Cysteine 92 and cysteine 142 form a disulfide bridge. The N-linked (GlcNAc...) asparagine glycan is linked to asparagine 110.

This sequence belongs to the IL-1 family.

The protein localises to the secreted. It localises to the cytoplasm. In terms of biological role, anti-inflammatory antagonist of interleukin-1 family of proinflammatory cytokines such as interleukin-1beta/IL1B and interleukin-1alpha/IL1A. Protects from immune dysregulation and uncontrolled systemic inflammation triggered by IL1 for a range of innate stimulatory agents such as pathogens. The protein is Interleukin-1 receptor antagonist protein (Il1rn) of Mus musculus (Mouse).